The following is a 278-amino-acid chain: Large ribosomal subunit protein uL2 (278 aa).

The tract at residues 224–278 (VAMNPVDHPHGGGEGRTSGGRNPVTPWGVPTKGKKTRSNKRTDTFILSSRHNRKK) is disordered.

Belongs to the universal ribosomal protein uL2 family. In terms of assembly, part of the 50S ribosomal subunit. Forms a bridge to the 30S subunit in the 70S ribosome.

In terms of biological role, one of the primary rRNA binding proteins. Required for association of the 30S and 50S subunits to form the 70S ribosome, for tRNA binding and peptide bond formation. It has been suggested to have peptidyltransferase activity; this is somewhat controversial. Makes several contacts with the 16S rRNA in the 70S ribosome. This Methylorubrum extorquens (strain CM4 / NCIMB 13688) (Methylobacterium extorquens) protein is Large ribosomal subunit protein uL2.